A 237-amino-acid chain; its full sequence is Ribonuclease PH (237 aa).

Phosphate is bound by residues R86 and 124 to 126; that span reads GTR.

It belongs to the RNase PH family. In terms of assembly, homohexameric ring arranged as a trimer of dimers.

It catalyses the reaction tRNA(n+1) + phosphate = tRNA(n) + a ribonucleoside 5'-diphosphate. Its function is as follows. Phosphorolytic 3'-5' exoribonuclease that plays an important role in tRNA 3'-end maturation. Removes nucleotide residues following the 3'-CCA terminus of tRNAs; can also add nucleotides to the ends of RNA molecules by using nucleoside diphosphates as substrates, but this may not be physiologically important. Probably plays a role in initiation of 16S rRNA degradation (leading to ribosome degradation) during starvation. The chain is Ribonuclease PH from Rhodopseudomonas palustris (strain ATCC BAA-98 / CGA009).